The primary structure comprises 161 residues: MPSFDVVCEANMIEVKNAIEQSNKEISTRFDFKGSDARVEQKERELTAFADDEFKLGQVKDVLVSKMAKRNVDVRFLDYGKIEKIGGDKVKQVVTVKKGVSGDLAKKIVKLVKDSKIKVQASIQGDAVRVTGTKRDDLQSVIAMLRKDVTDTPLDFNNFRD.

The protein belongs to the YajQ family.

Its function is as follows. Nucleotide-binding protein. The sequence is that of Nucleotide-binding protein Bphy_0527 from Paraburkholderia phymatum (strain DSM 17167 / CIP 108236 / LMG 21445 / STM815) (Burkholderia phymatum).